The sequence spans 227 residues: Protein lin-28 (227 aa).

Residues 1–17 show a composition bias toward polar residues; the sequence is MSTVVSEGRNDGNNRYS. Positions 1–27 are disordered; sequence MSTVVSEGRNDGNNRYSPQDEVEDRLP. One can recognise a CSD domain in the interval 52–120; it reads RYFGSCKWFN…GREAYAVSGE (69 aa). 2 CCHC-type zinc fingers span residues 143–160 and 166–183; these read RCFRCGKFATHKAKSCPN and KVCYTCGSEEHVSSICPE. The Zn(2+) site is built by Cys144, Cys147, His153, Cys158, Cys168, Cys171, His176, and Cys181. A disordered region spans residues 181–227; the sequence is CPERRRKHRPEQVAAEEAEAARMAAEKSSPTTSDDDIREKNSNSSDE.

The protein belongs to the lin-28 family. As to quaternary structure, component of a complex at least containing lep-2, lin-28 and the long non-coding RNA lep-5, which mediates the degradation of lin-28. In terms of processing, cleavage by caspase ced-3 during larval development probably induces lin-28 degradation.

It is found in the cytoplasm. Its function is as follows. Heterochronic protein which controls the choice of stage specific cell fates. Regulates the timing of the second larval stage events (L2 events) in the hypodermis. May negatively regulate the larval to adult transition via the suppression of the microRNA (miRNA) let-7 during L3. Through this regulatory role, controls the timing of the sexual maturation of the nervous system. Also has a role in the fox-1-sex-1-mediated determination of sexual fate. Plays a role in governing the developmental timing of male tail tip morphogenesis. Plays a role in controlling the seam cell number during larval stages. Plays a role in vulval development. The sequence is that of Protein lin-28 from Caenorhabditis elegans.